A 90-amino-acid chain; its full sequence is Putative membrane protein insertion efficiency factor (90 aa).

The protein belongs to the UPF0161 family.

The protein resides in the cell inner membrane. In terms of biological role, could be involved in insertion of integral membrane proteins into the membrane. In Thermosynechococcus vestitus (strain NIES-2133 / IAM M-273 / BP-1), this protein is Putative membrane protein insertion efficiency factor.